The sequence spans 445 residues: Tubulin beta-1 chain (445 aa).

The MREI motif signature appears at 1–4; the sequence is MREI. Residues Q11, E69, S138, G142, T143, G144, N204, and N226 each coordinate GTP. Residue E69 participates in Mg(2+) binding. Residues 425–445 are disordered; sequence YQDATAEEEGEFEEEGEEELA. Positions 429–445 are enriched in acidic residues; sequence TAEEEGEFEEEGEEELA. At E438 the chain carries 5-glutamyl polyglutamate.

The protein belongs to the tubulin family. In terms of assembly, dimer of alpha and beta chains. A typical microtubule is a hollow water-filled tube with an outer diameter of 25 nm and an inner diameter of 15 nM. Alpha-beta heterodimers associate head-to-tail to form protofilaments running lengthwise along the microtubule wall with the beta-tubulin subunit facing the microtubule plus end conferring a structural polarity. Microtubules usually have 13 protofilaments but different protofilament numbers can be found in some organisms and specialized cells. It depends on Mg(2+) as a cofactor. Some glutamate residues at the C-terminus are polyglycylated, resulting in polyglycine chains on the gamma-carboxyl group. Glycylation is mainly limited to tubulin incorporated into axonemes (cilia and flagella) whereas glutamylation is prevalent in neuronal cells, centrioles, axonemes, and the mitotic spindle. Both modifications can coexist on the same protein on adjacent residues, and lowering polyglycylation levels increases polyglutamylation, and reciprocally. The precise function of polyglycylation is still unclear. In terms of processing, some glutamate residues at the C-terminus are polyglutamylated, resulting in polyglutamate chains on the gamma-carboxyl group. Polyglutamylation plays a key role in microtubule severing by spastin (SPAST). SPAST preferentially recognizes and acts on microtubules decorated with short polyglutamate tails: severing activity by SPAST increases as the number of glutamates per tubulin rises from one to eight, but decreases beyond this glutamylation threshold.

It is found in the cytoplasm. The protein localises to the cytoskeleton. In terms of biological role, tubulin is the major constituent of microtubules, a cylinder consisting of laterally associated linear protofilaments composed of alpha- and beta-tubulin heterodimers. Microtubules grow by the addition of GTP-tubulin dimers to the microtubule end, where a stabilizing cap forms. Below the cap, tubulin dimers are in GDP-bound state, owing to GTPase activity of alpha-tubulin. This chain is Tubulin beta-1 chain, found in Gadus morhua (Atlantic cod).